The sequence spans 221 residues: Interleukin-12 subunit alpha (221 aa).

Residues 1–25 (MCPLRSLLLISTLVLLHHLPHLSLG) form the signal peptide. 3 disulfides stabilise this stretch: Cys-39-Cys-112, Cys-66-Cys-198, and Cys-87-Cys-125. N-linked (GlcNAc...) asparagine glycosylation occurs at Asn-95.

Belongs to the IL-6 superfamily. Heterodimer with IL12B; disulfide-linked. This heterodimer is known as interleukin IL-12. Heterodimer with EBI3/IL27B; not disulfide-linked. This heterodimer is known as interleukin IL-35. Interacts with NBR1; this interaction promotes IL-12 secretion.

The protein localises to the secreted. In terms of biological role, heterodimerizes with IL12B to form the IL-12 cytokine or with EBI3/IL27B to form the IL-35 cytokine. IL-12 is primarily produced by professional antigen-presenting cells (APCs) such as B-cells and dendritic cells (DCs) as well as macrophages and granulocytes and regulates T-cell and natural killer-cell responses, induces the production of interferon-gamma (IFN-gamma), favors the differentiation of T-helper 1 (Th1) cells and is an important link between innate resistance and adaptive immunity. Mechanistically, exerts its biological effects through a receptor composed of IL12R1 and IL12R2 subunits. Binding to the receptor results in the rapid tyrosine phosphorylation of a number of cellular substrates including the JAK family kinases TYK2 and JAK2. In turn, recruited STAT4 gets phosphorylated and translocates to the nucleus where it regulates cytokine/growth factor responsive genes. As part of IL-35, plays essential roles in maintaining the immune homeostasis of the liver microenvironment and also functions as an immune-suppressive cytokine. Mediates biological events through unconventional receptors composed of IL12RB2 and gp130/IL6ST heterodimers or homodimers. Signaling requires the transcription factors STAT1 and STAT4, which form a unique heterodimer that binds to distinct DNA sites. This is Interleukin-12 subunit alpha (IL12A) from Bubalus carabanensis (Swamp type water buffalo).